A 267-amino-acid polypeptide reads, in one-letter code: Ubiquinone biosynthesis protein COQ4, mitochondrial (267 aa).

A mitochondrion-targeting transit peptide spans 1–17; that stretch reads MSRLKIPSQLLRGGRGF. Residues histidine 153, aspartate 154, histidine 157, and glutamate 169 each coordinate Zn(2+).

Belongs to the COQ4 family. In terms of assembly, component of a multi-subunit COQ enzyme complex, composed of at least COQ3, COQ4, COQ5, COQ6, COQ7 and COQ9. The cofactor is Zn(2+).

It localises to the mitochondrion inner membrane. It carries out the reaction a 4-hydroxy-3-methoxy-5-(all-trans-polyprenyl)benzoate + H(+) = a 2-methoxy-6-(all-trans-polyprenyl)phenol + CO2. It participates in cofactor biosynthesis; ubiquinone biosynthesis. In terms of biological role, lyase that catalyzes the C1-decarboxylation of 4-hydroxy-3-methoxy-5-(all-trans-polyprenyl)benzoic acid into 2-methoxy-6-(all-trans-polyprenyl)phenol during ubiquinone biosynthesis. This chain is Ubiquinone biosynthesis protein COQ4, mitochondrial, found in Arthroderma otae (strain ATCC MYA-4605 / CBS 113480) (Microsporum canis).